Here is a 1561-residue protein sequence, read N- to C-terminus: Adhesion G protein-coupled receptor B2 (1561 aa).

Positions 1-20 (MTPACPLLLSVILSLRLATA) are cleaved as a signal peptide. Residues 21–930 (FDPAPSACSA…ELAGAPSVPL (910 aa)) are Extracellular-facing. N-linked (GlcNAc...) asparagine glycosylation is found at N94, N182, and N183. Residue S257 is glycosylated (O-linked (Xyl...) (chondroitin sulfate) serine). TSP type-1 domains follow at residues 300–353 (DPAA…ATCP), 355–408 (HGVW…AACP), 410–463 (EGQW…LDCP), and 466–519 (DGKW…KRCP). 14 disulfide bridges follow: C312–C346, C316–C352, C327–C336, C367–C402, C371–C407, C382–C392, C422–C457, C426–C462, C437–C447, C478–C513, C482–C518, C493–C503, C525–C560, and C548–C578. N-linked (GlcNAc...) asparagine glycosylation occurs at N347. An N-linked (GlcNAc...) asparagine glycan is attached at N428. N-linked (GlcNAc...) asparagine glycosylation is found at N551 and N636. The 171-residue stretch at 748–918 (DRLFLPKEVL…AVLAQPPKDL (171 aa)) folds into the GAIN-B domain. Residues 757–797 (LSLSSPGKPATPGAATAGSPGRGRGPGTVPPGPGHAHQRLL) are disordered. The span at 760-775 (SSPGKPATPGAATAGS) shows a compositional bias: low complexity. An N-linked (GlcNAc...) asparagine glycan is attached at N861. Cystine bridges form between C868-C900 and C888-C902. Residues 868–918 (CASWDYSRADTNSGDWNTESCQTLETQAAHTRCQCQHLSTFAVLAQPPKDL) are GPS. A helical transmembrane segment spans residues 931-951 (VIGCAVSCMALLTLLAIYAAF). Residues 952–959 (WRFIKSER) are Cytoplasmic-facing. The chain crosses the membrane as a helical span at residues 960 to 980 (SIILLNFCLSILASNILILVG). Residues 981–988 (QSRVLSKG) are Extracellular-facing. The chain crosses the membrane as a helical span at residues 989–1009 (VCTMTAAFLHFFFLSSFCWVL). Residues 1010 to 1030 (TEAWQSYLAVIGRMRTRLVRK) lie on the Cytoplasmic side of the membrane. The helical transmembrane segment at 1031–1051 (RFLCLGWGLPALVVAVSVGFT) threads the bilayer. Residues 1052 to 1072 (RTKGYGTSSYCWLSLEGGLLY) lie on the Extracellular side of the membrane. Residues 1073-1093 (AFVGPAAVIVLVNMLIGIIVF) form a helical membrane-spanning segment. At 1094 to 1115 (NKLMARDGVSDKSKKQRAGSER) the chain is on the cytoplasmic side. Residues 1116 to 1136 (CPWASLLLPCSACGAVPSPLL) traverse the membrane as a helical segment. At 1137–1147 (SSASARNAMAS) the chain is on the extracellular side. A helical transmembrane segment spans residues 1148–1168 (LWSSCVVLPLLALTWMSAVLA). The Cytoplasmic segment spans residues 1169–1561 (MTDRRSVLFQ…PPDGDFQTEV (393 aa)). Phosphotyrosine is present on Y1345. Disordered regions lie at residues 1355–1377 (LQPGGGGTAGEEAPRARPEGTPR), 1417–1447 (FQPPPPTPSARQVPEPGERSRTMPRTVPGST), and 1491–1561 (RYRS…QTEV). Residues 1366–1376 (EAPRARPEGTP) are compositionally biased toward basic and acidic residues. Basic and acidic residues predominate over residues 1491–1502 (RYRSQSSAKEKP). The span at 1519–1528 (SWSTFKSMTL) shows a compositional bias: polar residues. Residues 1551–1561 (EPPDGDFQTEV) are compositionally biased toward acidic residues.

This sequence belongs to the G-protein coupled receptor 2 family. Adhesion G-protein coupled receptor (ADGR) subfamily. In terms of assembly, heterodimer of 2 chains generated by proteolytic processing; the large extracellular N-terminal fragment and the membrane-bound C-terminal fragment predominantly remain associated and non-covalently linked. Interacts with GABPB2. Interacts (via carboxy-terminus) with TAX1BP3. Interacts with GNAZ. Interacts with SH3GL2. Glycosylated. Post-translationally, autoproteolytically processed at the GPS region of the GAIN-B domain; this cleavage modulates receptor activity. Additionally, furin is involved in the cleavage at another site, in the middle of the extracellular domain, generating a soluble fragment. In terms of tissue distribution, specifically expressed in the brain. The peak level in the brain is observed 10 days after birth.

The protein resides in the cell membrane. It is found in the secreted. Its activity is regulated as follows. Receptor activity is regulated by proteolytic processing. The long N-terminal has a an inhibitory effect on the constitutive signaling activity. Removal of the N-terminal region induces an increase of the receptor activity. Orphan G-protein coupled receptor involved in cell adhesion and probably in cell-cell interactions. Activates NFAT-signaling pathway, a transcription factor, via the G-protein GNAZ. Involved in angiogenesis inhibition. The polypeptide is Adhesion G protein-coupled receptor B2 (Adgrb2) (Mus musculus (Mouse)).